Reading from the N-terminus, the 156-residue chain is MPRRGPVAKRDVLPDPIYNSKLVTRLINKIMIDGKKSKAQKILYTAFDIIRERTGKDPMEVFEQALKNVMPVLEVRARRVGGANYQVPVEVRPDRRVSLGLRWLVQYSRLRGEKTMEERLANEIMDAANNTGAAVKKREDTHKMAEANKAFAHYRW.

It belongs to the universal ribosomal protein uS7 family. In terms of assembly, part of the 30S ribosomal subunit. Contacts proteins S9 and S11.

One of the primary rRNA binding proteins, it binds directly to 16S rRNA where it nucleates assembly of the head domain of the 30S subunit. Is located at the subunit interface close to the decoding center, probably blocks exit of the E-site tRNA. This is Small ribosomal subunit protein uS7 from Geobacillus thermodenitrificans (strain NG80-2).